A 299-amino-acid polypeptide reads, in one-letter code: MTLYDVPAPAKLNLFLHVVGRRADGYHLLQTAFRFIDLADTLHFEARADGAIGRAYELPGVAESDDLVVRAARSLQRATGTRQGAQIGLHKRIPQGGGLGGGSSDAATTLIALNRLWGTGLSRSQLMQLALPLGADVPVFVFGQSAFAQGVGEDLTAVALPPAAYLVVQPDAGVPTAAIFSDPDLTRDCASVTIADFLALLTSCFGRNDLEPVVLRRYPEVSGAVRWLFEHGLRVRMSGSGACLFAEFPTLPEAVLAQEEITATMRVAGKTTSHTHPGFRLVQASTGLTEHPLRNWIAS.

Lys-11 is a catalytic residue. 94–104 (PQGGGLGGGSS) contributes to the ATP binding site. Asp-136 is an active-site residue.

It belongs to the GHMP kinase family. IspE subfamily.

It carries out the reaction 4-CDP-2-C-methyl-D-erythritol + ATP = 4-CDP-2-C-methyl-D-erythritol 2-phosphate + ADP + H(+). Its pathway is isoprenoid biosynthesis; isopentenyl diphosphate biosynthesis via DXP pathway; isopentenyl diphosphate from 1-deoxy-D-xylulose 5-phosphate: step 3/6. Its function is as follows. Catalyzes the phosphorylation of the position 2 hydroxy group of 4-diphosphocytidyl-2C-methyl-D-erythritol. In Bordetella parapertussis (strain 12822 / ATCC BAA-587 / NCTC 13253), this protein is 4-diphosphocytidyl-2-C-methyl-D-erythritol kinase.